Here is a 68-residue protein sequence, read N- to C-terminus: MKYLNTTDCSLFLAERSKFMTKYALIGLLAVCATVLCFSLIFRERLCELNIHRGNTVVQVTLAYEARK.

Residues 23 to 42 (YALIGLLAVCATVLCFSLIF) form a helical membrane-spanning segment.

It belongs to the Hok/Gef family.

It localises to the cell inner membrane. Toxic component of a type I toxin-antitoxin (TA) system. Its normal function is believed to be effective plasmid stabilization through postsegregational killing of cells that have lost the F plasmid. Promotes degradation of stable RNA in E.coli. This Escherichia coli (strain K12) protein is Protein SrnB (srnB).